A 232-amino-acid chain; its full sequence is N-(5'-phosphoribosyl)anthranilate isomerase (232 aa).

This sequence belongs to the TrpF family.

It catalyses the reaction N-(5-phospho-beta-D-ribosyl)anthranilate = 1-(2-carboxyphenylamino)-1-deoxy-D-ribulose 5-phosphate. The protein operates within amino-acid biosynthesis; L-tryptophan biosynthesis; L-tryptophan from chorismate: step 3/5. The sequence is that of N-(5'-phosphoribosyl)anthranilate isomerase (TRP1) from Lipomyces starkeyi (Oleaginous yeast).